A 422-amino-acid chain; its full sequence is Glutamyl-tRNA reductase (422 aa).

Substrate contacts are provided by residues 48 to 51, Ser-100, 105 to 107, and Gln-111; these read TCNR and EDQ. Cys-49 functions as the Nucleophile in the catalytic mechanism. 180–185 lines the NADP(+) pocket; that stretch reads GTGEMG.

The protein belongs to the glutamyl-tRNA reductase family. Homodimer.

It carries out the reaction (S)-4-amino-5-oxopentanoate + tRNA(Glu) + NADP(+) = L-glutamyl-tRNA(Glu) + NADPH + H(+). Its pathway is porphyrin-containing compound metabolism; protoporphyrin-IX biosynthesis; 5-aminolevulinate from L-glutamyl-tRNA(Glu): step 1/2. Catalyzes the NADPH-dependent reduction of glutamyl-tRNA(Glu) to glutamate 1-semialdehyde (GSA). The polypeptide is Glutamyl-tRNA reductase (Methanococcoides burtonii (strain DSM 6242 / NBRC 107633 / OCM 468 / ACE-M)).